The chain runs to 194 residues: AP-3 complex subunit sigma (194 aa).

The protein belongs to the adaptor complexes small subunit family. As to quaternary structure, adaptor protein complex 3 (AP-3) is a heterotetramer composed of 2 large adaptins (APL5 and APL6), a medium adaptin (APM3) and a small adaptin (APS3).

The protein localises to the golgi apparatus. Its subcellular location is the cytoplasmic vesicle membrane. Functionally, part of the AP-3 complex, an adaptor-related complex which is not clathrin-associated. The complex is associated with the Golgi region as well as more peripheral structures. It facilitates the budding of vesicles from the Golgi membrane and may be directly involved in trafficking to the vacuole. Required for the transport via the ALP pathway, which directs the transport of the cargo proteins PHO8 and VAM3 to the vacuole. This Saccharomyces cerevisiae (strain ATCC 204508 / S288c) (Baker's yeast) protein is AP-3 complex subunit sigma (APS3).